We begin with the raw amino-acid sequence, 153 residues long: Peptide methionine sulfoxide reductase B6 (153 aa).

In terms of domain architecture, MsrB spans 28 to 149 (NEEWRTVLSP…NSVALKFSSA (122 aa)). Positions 67, 70, 113, and 116 each coordinate Zn(2+). An intrachain disulfide couples Cys85 to Cys138. The Nucleophile role is filled by Cys138.

This sequence belongs to the MsrB Met sulfoxide reductase family. Zn(2+) is required as a cofactor.

The protein resides in the cytoplasm. It localises to the cytosol. It carries out the reaction L-methionyl-[protein] + [thioredoxin]-disulfide + H2O = L-methionyl-(R)-S-oxide-[protein] + [thioredoxin]-dithiol. Catalyzes the reduction of methionine sulfoxide (MetSO) to methionine in proteins. Plays a protective role against oxidative stress by restoring activity to proteins that have been inactivated by methionine oxidation. MSRB family specifically reduces the MetSO R-enantiomer. In Arabidopsis thaliana (Mouse-ear cress), this protein is Peptide methionine sulfoxide reductase B6 (MSRB6).